The following is a 242-amino-acid chain: DNA repair protein RecO (242 aa).

The protein belongs to the RecO family.

In terms of biological role, involved in DNA repair and RecF pathway recombination. In Wolbachia pipientis subsp. Culex pipiens (strain wPip), this protein is DNA repair protein RecO.